A 148-amino-acid polypeptide reads, in one-letter code: UPF0178 protein lpp0103 (148 aa).

It belongs to the UPF0178 family.

The protein is UPF0178 protein lpp0103 of Legionella pneumophila (strain Paris).